Here is a 1368-residue protein sequence, read N- to C-terminus: DNA-directed RNA polymerase subunit beta (1368 aa).

It belongs to the RNA polymerase beta chain family. In terms of assembly, the RNAP catalytic core consists of 2 alpha, 1 beta, 1 beta' and 1 omega subunit. When a sigma factor is associated with the core the holoenzyme is formed, which can initiate transcription.

The enzyme catalyses RNA(n) + a ribonucleoside 5'-triphosphate = RNA(n+1) + diphosphate. Its function is as follows. DNA-dependent RNA polymerase catalyzes the transcription of DNA into RNA using the four ribonucleoside triphosphates as substrates. The polypeptide is DNA-directed RNA polymerase subunit beta (Paraburkholderia phymatum (strain DSM 17167 / CIP 108236 / LMG 21445 / STM815) (Burkholderia phymatum)).